The chain runs to 362 residues: MFLRLFKYLWPERYLPEIPAQDPFDENPPPCGPGRVGVLLVNLGTPDEPTRGAIRRYLGEFLSDPRVIEIPRYLWMPILHGLVLAMRPKKLAPRYAGIWMEEGSPLLVYSQRQAAGVRQGLAARGVHAEVELAMRYGKPSIPAAITALRERGCDHILAVPLYPQYAASTTATVVDAVTRHAGRLRDQPALRFVKRFHNDPAYVEAQAGRIAEFWQAHGRPQKLVMSFHGLPRYSIELGDPYYRDCLDTARLLRERLGLREDEVEVTFQSRFGSARWLEPYTEPTLAELARQGVTEVDVVCPGFVADCLETLEEISQECRDAFVAAGGRQFRYIPALNDCPPWIEGLTDLVERQLRGWPTGNP.

The Fe cation site is built by histidine 228 and glutamate 309.

It belongs to the ferrochelatase family.

The protein localises to the cytoplasm. It carries out the reaction heme b + 2 H(+) = protoporphyrin IX + Fe(2+). It functions in the pathway porphyrin-containing compound metabolism; protoheme biosynthesis; protoheme from protoporphyrin-IX: step 1/1. Catalyzes the ferrous insertion into protoporphyrin IX. The sequence is that of Ferrochelatase from Bordetella parapertussis (strain 12822 / ATCC BAA-587 / NCTC 13253).